The sequence spans 370 residues: Putative transposase InsL for insertion sequence element IS186A (370 aa).

This sequence belongs to the transposase 11 family.

Functionally, involved in the transposition of the insertion sequence IS186. The protein is Putative transposase InsL for insertion sequence element IS186A (insL1) of Escherichia coli (strain K12).